The chain runs to 314 residues: MEFTDRNYTLVTEFILLGFPTRPELQIVLFLMFLTLYAIILIGNIGLMLLIRIDPHLQTPMYFFLSNLSFVDLCYFSDIVPKMLVNFLSENKSISYYGCALQFYFFCTFADTESFILAAMAYDRYVAICNPLLYTVVMSRGICMRLIVLSYLGGNMSSLVHTSFAFILKYCDKNVINHFFCDLPPLLKLSCTDTTINEWLLSTYGSSVEIICFIIIIISYFFILLSVLKIRSFSGRKKTFSTCASHLTSVTIYQGTLLFIYSRPSYLYSPNTDKIISVFYTIFIPVLNPLIYSLRNKDVKDAAEKVLRSKVDSS.

At 1–27 the chain is on the extracellular side; it reads MEFTDRNYTLVTEFILLGFPTRPELQI. A glycan (N-linked (GlcNAc...) asparagine) is linked at Asn-7. A helical transmembrane segment spans residues 28–48; sequence VLFLMFLTLYAIILIGNIGLM. Topologically, residues 49–56 are cytoplasmic; the sequence is LLIRIDPH. A helical transmembrane segment spans residues 57 to 77; the sequence is LQTPMYFFLSNLSFVDLCYFS. Topologically, residues 78 to 101 are extracellular; it reads DIVPKMLVNFLSENKSISYYGCAL. A disulfide bridge links Cys-99 with Cys-191. Residues 102–122 form a helical membrane-spanning segment; it reads QFYFFCTFADTESFILAAMAY. At 123-141 the chain is on the cytoplasmic side; the sequence is DRYVAICNPLLYTVVMSRG. Residues 142-162 traverse the membrane as a helical segment; sequence ICMRLIVLSYLGGNMSSLVHT. Over 163–198 the chain is Extracellular; the sequence is SFAFILKYCDKNVINHFFCDLPPLLKLSCTDTTINE. The chain crosses the membrane as a helical span at residues 199 to 219; it reads WLLSTYGSSVEIICFIIIIIS. At 220–239 the chain is on the cytoplasmic side; sequence YFFILLSVLKIRSFSGRKKT. The chain crosses the membrane as a helical span at residues 240–260; it reads FSTCASHLTSVTIYQGTLLFI. At 261–273 the chain is on the extracellular side; that stretch reads YSRPSYLYSPNTD. A helical membrane pass occupies residues 274–294; the sequence is KIISVFYTIFIPVLNPLIYSL. The Cytoplasmic portion of the chain corresponds to 295–314; it reads RNKDVKDAAEKVLRSKVDSS.

Belongs to the G-protein coupled receptor 1 family.

It localises to the cell membrane. Its function is as follows. Odorant receptor. In Homo sapiens (Human), this protein is Olfactory receptor 5I1 (OR5I1).